The following is a 212-amino-acid chain: Kynurenine formamidase (212 aa).

Trp-17 contributes to the substrate binding site. Zn(2+)-binding residues include His-48, His-52, and Asp-54. Catalysis depends on His-58, which acts as the Proton donor/acceptor. The Zn(2+) site is built by His-161 and Glu-173.

The protein belongs to the Cyclase 1 superfamily. KynB family. As to quaternary structure, homodimer. Zn(2+) serves as cofactor.

The enzyme catalyses N-formyl-L-kynurenine + H2O = L-kynurenine + formate + H(+). It functions in the pathway amino-acid degradation; L-tryptophan degradation via kynurenine pathway; L-kynurenine from L-tryptophan: step 2/2. Catalyzes the hydrolysis of N-formyl-L-kynurenine to L-kynurenine, the second step in the kynurenine pathway of tryptophan degradation. In Salinibacter ruber (strain DSM 13855 / M31), this protein is Kynurenine formamidase.